The sequence spans 196 residues: Translation machinery-associated protein 22 (196 aa).

Residues 111 to 182 (IIIKRIERNK…EAKEYIEKLL (72 aa)) form the SUI1 domain.

This sequence belongs to the DENR family. As to quaternary structure, interacts with the 40S ribosomal subunit.

It is found in the cytoplasm. The protein is Translation machinery-associated protein 22 (TMA22) of Lodderomyces elongisporus (strain ATCC 11503 / CBS 2605 / JCM 1781 / NBRC 1676 / NRRL YB-4239) (Yeast).